A 112-amino-acid chain; its full sequence is Hydrogenase maturation factor HypA (112 aa).

Histidine 2 is a binding site for Ni(2+). Residues cysteine 72, cysteine 75, cysteine 88, and cysteine 91 each contribute to the Zn(2+) site.

It belongs to the HypA/HybF family.

In terms of biological role, involved in the maturation of [NiFe] hydrogenases. Required for nickel insertion into the metal center of the hydrogenase. The chain is Hydrogenase maturation factor HypA from Francisella philomiragia subsp. philomiragia (strain ATCC 25017 / CCUG 19701 / FSC 153 / O#319-036).